Here is a 156-residue protein sequence, read N- to C-terminus: 6,7-dimethyl-8-ribityllumazine synthase (156 aa).

Residues Phe22, 57-59 (AYE), and 81-83 (TVI) each bind 5-amino-6-(D-ribitylamino)uracil. 86-87 (GT) is a binding site for (2S)-2-hydroxy-3-oxobutyl phosphate. The active-site Proton donor is the His89. Phe114 serves as a coordination point for 5-amino-6-(D-ribitylamino)uracil. Arg128 contacts (2S)-2-hydroxy-3-oxobutyl phosphate.

The protein belongs to the DMRL synthase family. As to quaternary structure, forms an icosahedral capsid composed of 60 subunits, arranged as a dodecamer of pentamers.

It carries out the reaction (2S)-2-hydroxy-3-oxobutyl phosphate + 5-amino-6-(D-ribitylamino)uracil = 6,7-dimethyl-8-(1-D-ribityl)lumazine + phosphate + 2 H2O + H(+). The protein operates within cofactor biosynthesis; riboflavin biosynthesis; riboflavin from 2-hydroxy-3-oxobutyl phosphate and 5-amino-6-(D-ribitylamino)uracil: step 1/2. Catalyzes the formation of 6,7-dimethyl-8-ribityllumazine by condensation of 5-amino-6-(D-ribitylamino)uracil with 3,4-dihydroxy-2-butanone 4-phosphate. This is the penultimate step in the biosynthesis of riboflavin. The polypeptide is 6,7-dimethyl-8-ribityllumazine synthase (Citrobacter koseri (strain ATCC BAA-895 / CDC 4225-83 / SGSC4696)).